The primary structure comprises 118 residues: DNA-binding protein YG5714_1868 (118 aa).

It belongs to the PDCD5 family.

This Saccharolobus islandicus (strain Y.G.57.14 / Yellowstone #1) (Sulfolobus islandicus) protein is DNA-binding protein YG5714_1868.